Here is an 855-residue protein sequence, read N- to C-terminus: Pre-mRNA-splicing factor SYF1 (855 aa).

HAT repeat units lie at residues 15-47 (LVFEEEDLPYEEEIMRNQFSVKCWLRYIEFKQG), 48-80 (APKPRLNQLYERALKLLPCSYKLWYRYLKARRA), 90-122 (PAYEDVNNCHERAFVFMHKMPRLWLDYCQFLMD), 124-158 (GRVTHTRRTFDRALRALPITQHSRIWPLYLRFLRS), 160-192 (PLPETAVRGYRRFLKLSPESAEEYIEYLKSSDR), 198-230 (QRLATVVNDERFVSKAGKSNYQLWHELCDLISQ), 235-268 (VQSLNVDAIIRGGLTRFTDQLGKLWCSLADYYIR), 270-305 (GHFEKARDVYEEAIRTVMTVRDFTQVFDSYAQFEES), and 369-407 (GRPREIINTYTEAVQTVDPFKATGKPHTLWVAFAKFYED). The residue at position 420 (K420) is an N6-acetyllysine. HAT repeat units lie at residues 498–530 (GTFQSTKAVYDRILDLRIATPQIVINYAMFLEE), 532–566 (KYFEESFKAYERGISLFKWPNVSDIWSTYLTKFIA), 571–605 (RKLERARDLFEQALDGCPPKYAKTLYLLYAQLEEE), 643–677 (YGVTHTRGIYQKAIEVLSDEHAREMCLRFADMECK), and 679–713 (GEIDRARAIYSFCSQICDPRTTGAFWQTWKDFEVR). The tract at residues 810–855 (LAQQVNPEEIQLGEDEDEDEMDLEPNEVRLEQQSVPAAVFGSLKED) is disordered. Over residues 820-834 (QLGEDEDEDEMDLEP) the composition is skewed to acidic residues. The residue at position 851 (S851) is a Phosphoserine.

Belongs to the crooked-neck family. Associates with RNA polymerase II, the TCR-specific proteins CKN1/CSA and ERCC6/CSB, and XPA. Identified in the spliceosome C complex. Component of the XAB2 complex, a multimeric protein complex composed of XAB2, PRPF19, AQR, ZNF830, ISY1, and PPIE. Identified in a pentameric intron-binding (IB) complex composed of AQR, XAB2, ISY1, ZNF830 and PPIE that is incorporated into the spliceosome as a preassembled complex. The IB complex does not contain PRPF19.

It is found in the nucleus. Its function is as follows. Involved in pre-mRNA splicing as component of the spliceosome. Involved in transcription-coupled repair (TCR), transcription and pre-mRNA splicing. This Homo sapiens (Human) protein is Pre-mRNA-splicing factor SYF1 (XAB2).